The sequence spans 346 residues: UDP-N-acetylenolpyruvoylglucosamine reductase (346 aa).

The FAD-binding PCMH-type domain maps to 18-189 (LRAQARAFIA…VSVVFALKTH (172 aa)). Residue arginine 165 is part of the active site. Serine 240 serves as the catalytic Proton donor. Residue glutamate 336 is part of the active site.

The protein belongs to the MurB family. FAD is required as a cofactor.

Its subcellular location is the cytoplasm. The catalysed reaction is UDP-N-acetyl-alpha-D-muramate + NADP(+) = UDP-N-acetyl-3-O-(1-carboxyvinyl)-alpha-D-glucosamine + NADPH + H(+). It participates in cell wall biogenesis; peptidoglycan biosynthesis. Its function is as follows. Cell wall formation. The chain is UDP-N-acetylenolpyruvoylglucosamine reductase from Neisseria meningitidis serogroup B (strain ATCC BAA-335 / MC58).